A 304-amino-acid polypeptide reads, in one-letter code: Insulin-like growth factor 1 receptor (304 aa).

Fibronectin type-III domains lie at 1–43 (ERTV…TMPA) and 49–142 (IPGP…VQAK). Topologically, residues 1–147 (ERTVISNLRP…YVQAKTTYEN (147 aa)) are extracellular. N-linked (GlcNAc...) asparagine glycans are attached at residues Asn115 and Asn128. The helical transmembrane segment at 148-168 (FIHLIIALPVAVLLIVGGLVI) threads the bilayer. Topologically, residues 169–304 (MLYVFHRKRN…HMNGGRKNER (136 aa)) are cytoplasmic. At Ser225 the chain carries Phosphoserine; by GSK3-beta. Position 229 is a phosphoserine (Ser229). The tract at residues 231–304 (ENKPPEPEEL…HMNGGRKNER (74 aa)) is disordered. Positions 237–246 (PEELDLEPEN) are enriched in acidic residues. The span at 247–263 (MESVPLDPSASSSSLPL) shows a compositional bias: low complexity. Residues 264–273 (PDRHSGHKAE) are compositionally biased toward basic and acidic residues.

It belongs to the protein kinase superfamily. Tyr protein kinase family. Insulin receptor subfamily. As to quaternary structure, tetramer of 2 alpha and 2 beta chains linked by disulfide bonds. The alpha chains contribute to the formation of the ligand-binding domain, while the beta chain carries the kinase domain. Forms a hybrid receptor with INSR, the hybrid is a tetramer consisting of 1 alpha chain and 1 beta chain of INSR and 1 alpha chain and 1 beta chain of IGF1R. Interacts with ARRB1 and ARRB2. Interacts with GRB10. Interacts with RACK1. Interacts with SOCS1, SOCS2 and SOCS3. Interacts with 14-3-3 proteins. Interacts with NMD2. Interacts with MAP3K5. Interacts with STAT3. Found in a ternary complex with IGF1 and ITGAV:ITGB3 or ITGA6:ITGB4. Interacts (nascent precursor form) with ZFAND2B. In terms of processing, autophosphorylated on tyrosine residues in response to ligand binding. Autophosphorylation occurs in trans, i.e. one subunit of the dimeric receptor phosphorylates tyrosine residues on the other subunit. Autophosphorylation occurs in a sequential manner. While every single phosphorylation increases kinase activity, all three tyrosine residues in the kinase activation loop have to be phosphorylated for optimal activity. Can be autophosphorylated at additional tyrosine residues (in vitro). May also be phosphorylated at tyrosine residues by mTORC2. Autophosphorylated is followed by phosphorylation of juxtamembrane tyrosines and C-terminal serines. Phosphorylation of Ser-225 by GSK-3beta restrains kinase activity and promotes cell surface expression, it requires a priming phosphorylation at Ser-229. Dephosphorylated by PTPN1. Post-translationally, polyubiquitinated in the activation loop through both 'Lys-48' and 'Lys-29' linkages, promoting receptor endocytosis and subsequent degradation by the proteasome. Ubiquitination is facilitated by pre-existing phosphorylation. Sumoylated with SUMO1. In terms of processing, controlled by regulated intramembrane proteolysis (RIP). Undergoes metalloprotease-dependent constitutive ectodomain shedding to produce a membrane-anchored 52 kDa C-Terminal fragment which is further processed by presenilin gamma-secretase to yield an intracellular 50 kDa fragment.

Its subcellular location is the cell membrane. It catalyses the reaction L-tyrosyl-[protein] + ATP = O-phospho-L-tyrosyl-[protein] + ADP + H(+). Activated by autophosphorylation at tyrosines in the kinase activation loop; phosphorylation at all three tyrosine residues is required for optimal kinase activity. Inhibited by MSC1609119A-1, BMS-754807, PQIP, benzimidazole pyridinone, isoquinolinedione, bis-azaindole, 3-cyanoquinoline, 2,4-bis-arylamino-1,3-pyrimidine, pyrrolopyrimidine, pyrrole-5-carboxaldehyde, picropodophyllin (PPP), tyrphostin derivatives. While most inhibitors bind to the ATP binding pocket, MSC1609119A-1 functions as allosteric inhibitor and binds close to the DFG motif and the activation loop. In terms of biological role, receptor tyrosine kinase which mediates actions of insulin-like growth factor 1 (IGF1). Binds IGF1 with high affinity and IGF2 and insulin (INS) with a lower affinity. The activated IGF1R is involved in cell growth and survival control. IGF1R is crucial for tumor transformation and survival of malignant cell. Ligand binding activates the receptor kinase, leading to receptor autophosphorylation, and tyrosines phosphorylation of multiple substrates, that function as signaling adapter proteins including, the insulin-receptor substrates (IRS1/2), Shc and 14-3-3 proteins. Phosphorylation of IRSs proteins lead to the activation of two main signaling pathways: the PI3K-AKT/PKB pathway and the Ras-MAPK pathway. The result of activating the MAPK pathway is increased cellular proliferation, whereas activating the PI3K pathway inhibits apoptosis and stimulates protein synthesis. Phosphorylated IRS1 can activate the 85 kDa regulatory subunit of PI3K (PIK3R1), leading to activation of several downstream substrates, including protein AKT/PKB. AKT phosphorylation, in turn, enhances protein synthesis through mTOR activation and triggers the antiapoptotic effects of IGFIR through phosphorylation and inactivation of BAD. In parallel to PI3K-driven signaling, recruitment of Grb2/SOS by phosphorylated IRS1 or Shc leads to recruitment of Ras and activation of the ras-MAPK pathway. In addition to these two main signaling pathways IGF1R signals also through the Janus kinase/signal transducer and activator of transcription pathway (JAK/STAT). Phosphorylation of JAK proteins can lead to phosphorylation/activation of signal transducers and activators of transcription (STAT) proteins. In particular activation of STAT3, may be essential for the transforming activity of IGF1R. The JAK/STAT pathway activates gene transcription and may be responsible for the transforming activity. JNK kinases can also be activated by the IGF1R. IGF1 exerts inhibiting activities on JNK activation via phosphorylation and inhibition of MAP3K5/ASK1, which is able to directly associate with the IGF1R. When present in a hybrid receptor with INSR, binds IGF1. The sequence is that of Insulin-like growth factor 1 receptor (IGF1R) from Sus scrofa (Pig).